The following is a 172-amino-acid chain: Sec-independent protein translocase protein TatB (172 aa).

The chain crosses the membrane as a helical span at residues M1–G21. The segment at G97–Q129 is disordered.

It belongs to the TatB family. In terms of assembly, the Tat system comprises two distinct complexes: a TatABC complex, containing multiple copies of TatA, TatB and TatC subunits, and a separate TatA complex, containing only TatA subunits. Substrates initially bind to the TatABC complex, which probably triggers association of the separate TatA complex to form the active translocon.

The protein localises to the cell inner membrane. Functionally, part of the twin-arginine translocation (Tat) system that transports large folded proteins containing a characteristic twin-arginine motif in their signal peptide across membranes. Together with TatC, TatB is part of a receptor directly interacting with Tat signal peptides. TatB may form an oligomeric binding site that transiently accommodates folded Tat precursor proteins before their translocation. The chain is Sec-independent protein translocase protein TatB from Ralstonia nicotianae (strain ATCC BAA-1114 / GMI1000) (Ralstonia solanacearum).